The following is a 242-amino-acid chain: Eukaryotic translation initiation factor 4E type 1B (242 aa).

Positions 1–42 are disordered; that stretch reads MLAVEVSEAEGGIREWEEEEKEEEAAERTPTGEKSPNSPRTL. Residues 16–25 are compositionally biased toward acidic residues; it reads WEEEEKEEEA. Positions 32–41 are enriched in polar residues; that stretch reads GEKSPNSPRT. The tract at residues 62 to 65 is EIF4EBP1/2/3 binding; sequence HPLQ. An mRNA-binding site is contributed by 81–82; sequence WQ. The tract at residues 98 to 102 is EIF4EBP1/2/3 binding; the sequence is WALYS. MRNA is bound at residue 127-128; it reads WE. Residues 157–164 form an EIF4EBP1/2/3 binding region; sequence ETLLCLIG. MRNA contacts are provided by residues 182–187 and 230–232; these read RTKGDK and TKS.

The protein belongs to the eukaryotic initiation factor 4E family. As to quaternary structure, eIF4F is a multi-subunit complex, the composition of which varies with external and internal environmental conditions. It is composed of at least EIF4A, EIF4E and EIF4G.

Functionally, recognizes and binds the 7-methylguanosine-containing mRNA cap during an early step in the initiation of protein synthesis and facilitates ribosome binding by inducing the unwinding of the mRNAs secondary structure. This chain is Eukaryotic translation initiation factor 4E type 1B (EIF4E1B), found in Homo sapiens (Human).